The chain runs to 352 residues: PDZ and LIM domain protein 2 (352 aa).

In terms of domain architecture, PDZ spans 1-84 (MALTVDVAGP…PLRLQLDRSQ (84 aa)). 2 disordered regions span residues 67–97 (SKIR…DSSL) and 111–149 (YTES…TGEA). The span at 81-95 (DRSQATSPGQTNGDS) shows a compositional bias: polar residues. A compositionally biased stretch (low complexity) spans 111 to 135 (YTESQSSLRSSYSSPTSLSPRAGSP). Ser-124 carries the phosphoserine modification. Residue Thr-126 is modified to Phosphothreonine. Ser-127, Ser-129, Ser-134, Ser-137, Ser-143, Ser-161, Ser-197, Ser-203, Ser-213, and Ser-266 each carry phosphoserine. Residues 170–213 (LSYSGRPGSRQAGLGRAGDSAVLVLPPSPGPRSSRPSMDSEGGS) are disordered. In terms of domain architecture, LIM zinc-binding spans 284–344 (HTCEKCSTSI…EKHARQRYSA (61 aa)).

In terms of assembly, interacts with alpha-actinins ACTN1 and ACTN4, FLNA and MYH9. Interacts (via LIM zinc-binding domain) with MKRN2.

It localises to the cytoplasm. Its subcellular location is the nucleus. The protein localises to the cytoskeleton. In terms of biological role, probable adapter protein located at the actin cytoskeleton that promotes cell attachment. Necessary for the migratory capacity of epithelial cells. Overexpression enhances cell adhesion to collagen and fibronectin and suppresses anchorage independent growth. May contribute to tumor cell migratory capacity. This chain is PDZ and LIM domain protein 2 (PDLIM2), found in Homo sapiens (Human).